We begin with the raw amino-acid sequence, 309 residues long: Taste receptor type 2 member 20 (309 aa).

Residues Met1 to His6 lie on the Extracellular side of the membrane. The chain crosses the membrane as a helical span at residues Ile7–Ile27. The Cytoplasmic segment spans residues Ala28–Gln46. Residues Ile47 to Tyr67 form a helical membrane-spanning segment. Residues Ser68–Lys79 are Extracellular-facing. A helical membrane pass occupies residues Val80–Thr100. The Cytoplasmic portion of the chain corresponds to Ser101 to Ala125. Residues Lys126–Met146 traverse the membrane as a helical segment. Residues Lys147–Thr178 lie on the Extracellular side of the membrane. Residues Val179 to Ile199 form a helical membrane-spanning segment. Topologically, residues Tyr200 to Gln229 are cytoplasmic. The chain crosses the membrane as a helical span at residues Thr230–Trp250. The Extracellular portion of the chain corresponds to Asn251–Ile259. A helical transmembrane segment spans residues Val260 to Ile280. Topologically, residues Trp281 to Pro309 are cytoplasmic.

This sequence belongs to the G-protein coupled receptor T2R family.

It is found in the membrane. Its function is as follows. Receptor that may play a role in the perception of bitterness and is gustducin-linked. May play a role in sensing the chemical composition of the gastrointestinal content. The activity of this receptor may stimulate alpha gustducin, mediate PLC-beta-2 activation and lead to the gating of TRPM5. This is Taste receptor type 2 member 20 (TAS2R20) from Pan paniscus (Pygmy chimpanzee).